A 182-amino-acid chain; its full sequence is uncharacterized protein (182 aa).

The protein belongs to the staphylococcal tandem lipoprotein family.

This is an uncharacterized protein from Staphylococcus haemolyticus (strain JCSC1435).